Reading from the N-terminus, the 372-residue chain is 4-hydroxy-3-methylbut-2-en-1-yl diphosphate synthase (flavodoxin) (372 aa).

[4Fe-4S] cluster contacts are provided by Cys-270, Cys-273, Cys-305, and Glu-312.

It belongs to the IspG family. The cofactor is [4Fe-4S] cluster.

It carries out the reaction (2E)-4-hydroxy-3-methylbut-2-enyl diphosphate + oxidized [flavodoxin] + H2O + 2 H(+) = 2-C-methyl-D-erythritol 2,4-cyclic diphosphate + reduced [flavodoxin]. Its pathway is isoprenoid biosynthesis; isopentenyl diphosphate biosynthesis via DXP pathway; isopentenyl diphosphate from 1-deoxy-D-xylulose 5-phosphate: step 5/6. Functionally, converts 2C-methyl-D-erythritol 2,4-cyclodiphosphate (ME-2,4cPP) into 1-hydroxy-2-methyl-2-(E)-butenyl 4-diphosphate. The chain is 4-hydroxy-3-methylbut-2-en-1-yl diphosphate synthase (flavodoxin) from Salmonella choleraesuis (strain SC-B67).